Here is a 376-residue protein sequence, read N- to C-terminus: Chaperone protein DnaJ (376 aa).

Residues 5–70 (DYYEILGVSK…QKRAAYDQYG (66 aa)) enclose the J domain. A CR-type zinc finger spans residues 131–209 (GVTKEIRIPT…CHGHGRVERS (79 aa)). C144, C147, C161, C164, C183, C186, C197, and C200 together coordinate Zn(2+). CXXCXGXG motif repeat units lie at residues 144-151 (CDVCHGSG), 161-168 (CPTCHGSG), 183-190 (CPHCQGRG), and 197-204 (CNKCHGHG).

Belongs to the DnaJ family. As to quaternary structure, homodimer. The cofactor is Zn(2+).

The protein resides in the cytoplasm. In terms of biological role, participates actively in the response to hyperosmotic and heat shock by preventing the aggregation of stress-denatured proteins and by disaggregating proteins, also in an autonomous, DnaK-independent fashion. Unfolded proteins bind initially to DnaJ; upon interaction with the DnaJ-bound protein, DnaK hydrolyzes its bound ATP, resulting in the formation of a stable complex. GrpE releases ADP from DnaK; ATP binding to DnaK triggers the release of the substrate protein, thus completing the reaction cycle. Several rounds of ATP-dependent interactions between DnaJ, DnaK and GrpE are required for fully efficient folding. Also involved, together with DnaK and GrpE, in the DNA replication of plasmids through activation of initiation proteins. The protein is Chaperone protein DnaJ of Shigella flexneri.